Consider the following 184-residue polypeptide: Mitochondrial import inner membrane translocase subunit Tim22 (184 aa).

Intrachain disulfides connect cysteine 59/cysteine 131 and cysteine 150/cysteine 169. Transmembrane regions (helical) follow at residues 64–84 (ALAC…TAGI), 115–133 (YAKN…ECLV), and 160–180 (AGLK…AVID).

It belongs to the Tim17/Tim22/Tim23 family. In terms of assembly, core component of the TIM22 complex.

Its subcellular location is the mitochondrion inner membrane. Its function is as follows. Essential core component of the TIM22 complex, a complex that mediates the import and insertion of multi-pass transmembrane proteins into the mitochondrial inner membrane. In the TIM22 complex, it constitutes the voltage-activated and signal-gated channel. Forms a twin-pore translocase that uses the membrane potential as external driving force in 2 voltage-dependent steps. This Xenopus laevis (African clawed frog) protein is Mitochondrial import inner membrane translocase subunit Tim22 (timm22).